Here is a 982-residue protein sequence, read N- to C-terminus: Probable DNA-directed RNA polymerase (982 aa).

This sequence belongs to the RNA polymerase beta chain family.

It carries out the reaction RNA(n) + a ribonucleoside 5'-triphosphate = RNA(n+1) + diphosphate. In terms of biological role, the presence of the two linear plasmids, termed pGKL1 and pGKL2, in strains of Kluyveromyces lactis confers the killer phenotype to the host cell, by promoting the secretion of a toxin able to inhibit the growth of sensitive strains. The chain is Probable DNA-directed RNA polymerase from Kluyveromyces lactis (strain ATCC 8585 / CBS 2359 / DSM 70799 / NBRC 1267 / NRRL Y-1140 / WM37) (Yeast).